The following is a 480-amino-acid chain: Cysteine--tRNA ligase (480 aa).

A Zn(2+)-binding site is contributed by Cys29. A 'HIGH' region motif is present at residues 31–41 (PTVYGHAHLGH). Zn(2+) contacts are provided by Cys221, His246, and Glu250. The 'KMSKS' region signature appears at 278 to 282 (KMGKS). An ATP-binding site is contributed by Lys281.

Belongs to the class-I aminoacyl-tRNA synthetase family. In terms of assembly, monomer. It depends on Zn(2+) as a cofactor.

The protein resides in the cytoplasm. The catalysed reaction is tRNA(Cys) + L-cysteine + ATP = L-cysteinyl-tRNA(Cys) + AMP + diphosphate. The chain is Cysteine--tRNA ligase from Chlorobium chlorochromatii (strain CaD3).